A 129-amino-acid chain; its full sequence is Translation initiation factor 5A (129 aa).

Hypusine is present on lysine 36.

The protein belongs to the eIF-5A family.

It is found in the cytoplasm. In terms of biological role, functions by promoting the formation of the first peptide bond. The chain is Translation initiation factor 5A from Picrophilus torridus (strain ATCC 700027 / DSM 9790 / JCM 10055 / NBRC 100828 / KAW 2/3).